Here is a 100-residue protein sequence, read N- to C-terminus: Small ribosomal subunit protein uS14c (100 aa).

Belongs to the universal ribosomal protein uS14 family. Part of the 30S ribosomal subunit.

Its subcellular location is the plastid. The protein resides in the chloroplast. In terms of biological role, binds 16S rRNA, required for the assembly of 30S particles. The protein is Small ribosomal subunit protein uS14c of Citrus sinensis (Sweet orange).